A 230-amino-acid polypeptide reads, in one-letter code: Protein STK_02290 (230 aa).

The AMMECR1 domain maps to 15-213 (NLGKVLIKIA…EEKPKSEKIL (199 aa)).

This is Protein STK_02290 from Sulfurisphaera tokodaii (strain DSM 16993 / JCM 10545 / NBRC 100140 / 7) (Sulfolobus tokodaii).